The chain runs to 396 residues: Lipopolysaccharide assembly protein B (396 aa).

A helical membrane pass occupies residues methionine 1 to glycine 20. At arginine 21–asparagine 396 the chain is on the cytoplasmic side. 4 TPR repeats span residues leucine 35–glutamate 68, phenylalanine 77–tyrosine 109, glutamate 149–glutamate 182, and valine 221–tyrosine 254. 4 residues coordinate Fe cation: cysteine 364, cysteine 367, cysteine 378, and cysteine 381.

It belongs to the LapB family.

It is found in the cell inner membrane. Modulates cellular lipopolysaccharide (LPS) levels by regulating LpxC, which is involved in lipid A biosynthesis. May act by modulating the proteolytic activity of FtsH towards LpxC. May also coordinate assembly of proteins involved in LPS synthesis at the plasma membrane. The sequence is that of Lipopolysaccharide assembly protein B from Haemophilus influenzae (strain ATCC 51907 / DSM 11121 / KW20 / Rd).